Here is a 553-residue protein sequence, read N- to C-terminus: Copine-9 (553 aa).

C2 domains lie at 1–125 and 132–255; these read MSLG…ERTL and KCGT…FTVY. A glycan (N-linked (GlcNAc...) asparagine) is linked at asparagine 95. Ca(2+) contacts are provided by aspartate 163, aspartate 169, aspartate 225, aspartate 227, and aspartate 233. In terms of domain architecture, VWFA spans 299–500; that stretch reads NFTVAIDFTA…VQFVPFRDYV (202 aa). The interval 531–553 is disordered; sequence TRDIQPRPPPPANPSPIPAPEQP. Over residues 536 to 553 the composition is skewed to pro residues; that stretch reads PRPPPPANPSPIPAPEQP.

The protein belongs to the copine family. Ca(2+) is required as a cofactor. Expressed in melanocytes.

In terms of biological role, probable calcium-dependent phospholipid-binding protein that may play a role in calcium-mediated intracellular processes. Plays a role in dendrite formation by melanocytes. The polypeptide is Copine-9 (Homo sapiens (Human)).